A 546-amino-acid polypeptide reads, in one-letter code: 2-isopropylmalate synthase (546 aa).

The Pyruvate carboxyltransferase domain maps to 8–271; the sequence is ILIFDTTLRD…NSFFKRNPDS (264 aa). The Mn(2+) site is built by aspartate 17, histidine 208, histidine 210, and asparagine 244. The regulatory domain stretch occupies residues 408–546; sequence QLSLVQVSCG…NNTYISNPAN (139 aa).

Belongs to the alpha-IPM synthase/homocitrate synthase family. LeuA type 1 subfamily. As to quaternary structure, homodimer. The cofactor is Mn(2+).

It localises to the cytoplasm. It carries out the reaction 3-methyl-2-oxobutanoate + acetyl-CoA + H2O = (2S)-2-isopropylmalate + CoA + H(+). The protein operates within amino-acid biosynthesis; L-leucine biosynthesis; L-leucine from 3-methyl-2-oxobutanoate: step 1/4. Catalyzes the condensation of the acetyl group of acetyl-CoA with 3-methyl-2-oxobutanoate (2-ketoisovalerate) to form 3-carboxy-3-hydroxy-4-methylpentanoate (2-isopropylmalate). The sequence is that of 2-isopropylmalate synthase from Prochlorococcus marinus (strain MIT 9301).